The sequence spans 371 residues: Beta sliding clamp (371 aa).

It belongs to the beta sliding clamp family. Forms a ring-shaped head-to-tail homodimer around DNA which binds and tethers DNA polymerases and other proteins to the DNA. The DNA replisome complex has a single clamp-loading complex (3 tau and 1 each of delta, delta', psi and chi subunits) which binds 3 Pol III cores (1 core on the leading strand and 2 on the lagging strand) each with a beta sliding clamp dimer. Additional proteins in the replisome are other copies of gamma, psi and chi, Ssb, DNA helicase and RNA primase.

It localises to the cytoplasm. Its function is as follows. Confers DNA tethering and processivity to DNA polymerases and other proteins. Acts as a clamp, forming a ring around DNA (a reaction catalyzed by the clamp-loading complex) which diffuses in an ATP-independent manner freely and bidirectionally along dsDNA. Initially characterized for its ability to contact the catalytic subunit of DNA polymerase III (Pol III), a complex, multichain enzyme responsible for most of the replicative synthesis in bacteria; Pol III exhibits 3'-5' exonuclease proofreading activity. The beta chain is required for initiation of replication as well as for processivity of DNA replication. The polypeptide is Beta sliding clamp (dnaN) (Treponema pallidum (strain Nichols)).